We begin with the raw amino-acid sequence, 353 residues long: MTAILERRESASLWGRFCNWITSTENRLYIGWFGVLMIPTLLTATSVFIIAFIAAPPVDIDGIREPVSGSLLYGNNIISGAIIPTSAAIGLHFYPIWEAASVDEWLYNGGPYELIVLHFLLGVACYMGREWELSFRLGMRPWIAVAYSAPVAAATAVFLIYPIGQGSFSDGMPLGISGTFNFMIVFQAEHNILMHPFHMLGVAGVFGGSLFSAMHGSLVTSSLIRETTENESANEGYRFGQEEETYNIVAAHGYFGRLIFQYASFNNSRSLHFFLAAWPVVGIWFTALGISTMAFNLNGFNFNQSVVDSQGRVINTWADIINRANLGMEVMHERNAHNFPLDLAAVEAPSTNG.

Thr-2 is modified (N-acetylthreonine). Thr-2 is modified (phosphothreonine). Transmembrane regions (helical) follow at residues 29-46 (YIGW…TATS), 118-133 (HFLL…EWEL), and 142-156 (WIAV…AATA). His-118 is a binding site for chlorophyll a. Residue Tyr-126 participates in pheophytin a binding. [CaMn4O5] cluster contacts are provided by Asp-170 and Glu-189. The helical transmembrane segment at 197–218 (FHMLGVAGVFGGSLFSAMHGSL) threads the bilayer. His-198 lines the chlorophyll a pocket. A quinone contacts are provided by residues His-215 and 264-265 (SF). His-215 provides a ligand contact to Fe cation. Residue His-272 participates in Fe cation binding. The chain crosses the membrane as a helical span at residues 274–288 (FLAAWPVVGIWFTAL). 4 residues coordinate [CaMn4O5] cluster: His-332, Glu-333, Asp-342, and Ala-344. Positions 345-353 (AVEAPSTNG) are excised as a propeptide.

It belongs to the reaction center PufL/M/PsbA/D family. As to quaternary structure, PSII is composed of 1 copy each of membrane proteins PsbA, PsbB, PsbC, PsbD, PsbE, PsbF, PsbH, PsbI, PsbJ, PsbK, PsbL, PsbM, PsbT, PsbX, PsbY, PsbZ, Psb30/Ycf12, at least 3 peripheral proteins of the oxygen-evolving complex and a large number of cofactors. It forms dimeric complexes. The D1/D2 heterodimer binds P680, chlorophylls that are the primary electron donor of PSII, and subsequent electron acceptors. It shares a non-heme iron and each subunit binds pheophytin, quinone, additional chlorophylls, carotenoids and lipids. D1 provides most of the ligands for the Mn4-Ca-O5 cluster of the oxygen-evolving complex (OEC). There is also a Cl(-1) ion associated with D1 and D2, which is required for oxygen evolution. The PSII complex binds additional chlorophylls, carotenoids and specific lipids. serves as cofactor. Post-translationally, tyr-161 forms a radical intermediate that is referred to as redox-active TyrZ, YZ or Y-Z. In terms of processing, C-terminally processed by CTPA; processing is essential to allow assembly of the oxygen-evolving complex and thus photosynthetic growth.

The protein localises to the plastid. Its subcellular location is the chloroplast thylakoid membrane. The catalysed reaction is 2 a plastoquinone + 4 hnu + 2 H2O = 2 a plastoquinol + O2. Functionally, photosystem II (PSII) is a light-driven water:plastoquinone oxidoreductase that uses light energy to abstract electrons from H(2)O, generating O(2) and a proton gradient subsequently used for ATP formation. It consists of a core antenna complex that captures photons, and an electron transfer chain that converts photonic excitation into a charge separation. The D1/D2 (PsbA/PsbD) reaction center heterodimer binds P680, the primary electron donor of PSII as well as several subsequent electron acceptors. This Ceratophyllum demersum (Rigid hornwort) protein is Photosystem II protein D1.